The sequence spans 367 residues: UDP-N-acetylglucosamine--N-acetylmuramyl-(pentapeptide) pyrophosphoryl-undecaprenol N-acetylglucosamine transferase (367 aa).

Residues threonine 10 to glycine 12, asparagine 124, serine 196, and glutamine 300 each bind UDP-N-acetyl-alpha-D-glucosamine.

The protein belongs to the glycosyltransferase 28 family. MurG subfamily.

The protein localises to the cell membrane. It catalyses the reaction di-trans,octa-cis-undecaprenyl diphospho-N-acetyl-alpha-D-muramoyl-L-alanyl-D-glutamyl-meso-2,6-diaminopimeloyl-D-alanyl-D-alanine + UDP-N-acetyl-alpha-D-glucosamine = di-trans,octa-cis-undecaprenyl diphospho-[N-acetyl-alpha-D-glucosaminyl-(1-&gt;4)]-N-acetyl-alpha-D-muramoyl-L-alanyl-D-glutamyl-meso-2,6-diaminopimeloyl-D-alanyl-D-alanine + UDP + H(+). It functions in the pathway cell wall biogenesis; peptidoglycan biosynthesis. Cell wall formation. Catalyzes the transfer of a GlcNAc subunit on undecaprenyl-pyrophosphoryl-MurNAc-pentapeptide (lipid intermediate I) to form undecaprenyl-pyrophosphoryl-MurNAc-(pentapeptide)GlcNAc (lipid intermediate II). The sequence is that of UDP-N-acetylglucosamine--N-acetylmuramyl-(pentapeptide) pyrophosphoryl-undecaprenol N-acetylglucosamine transferase from Natranaerobius thermophilus (strain ATCC BAA-1301 / DSM 18059 / JW/NM-WN-LF).